A 480-amino-acid chain; its full sequence is Probable E3 ubiquitin protein ligase DRIPH (480 aa).

An RING-type zinc finger spans residues Cys16–Asn57. 4 disordered regions span residues Gly93 to Asn133, Arg167 to Lys193, Thr241 to Glu261, and Val280 to Val356. A compositionally biased stretch (basic residues) spans Ser103 to Thr112. Over residues Ser113–Asn133 the composition is skewed to low complexity. Over residues Lys175–Lys193 the composition is skewed to basic and acidic residues. Residues Val246–Val260 are compositionally biased toward acidic residues. Residues Gly298–Ser309 show a composition bias toward polar residues.

The enzyme catalyses S-ubiquitinyl-[E2 ubiquitin-conjugating enzyme]-L-cysteine + [acceptor protein]-L-lysine = [E2 ubiquitin-conjugating enzyme]-L-cysteine + N(6)-ubiquitinyl-[acceptor protein]-L-lysine.. It functions in the pathway protein modification; protein ubiquitination. The sequence is that of Probable E3 ubiquitin protein ligase DRIPH from Arabidopsis thaliana (Mouse-ear cress).